Reading from the N-terminus, the 451-residue chain is Protease RseP (451 aa).

H22 lines the Zn(2+) pocket. E23 is a catalytic residue. H26 contributes to the Zn(2+) binding site. A helical transmembrane segment spans residues 98-120; that stretch reads AAIVSAGPIANFLFAIVAYWLVF. PDZ domains are found at residues 115–186 and 199–280; these read AYWL…APFG and QWQF…ERES. 2 helical membrane passes run 377-399 and 427-446; these read LVYY…LFPL and FSYR…ALFN.

This sequence belongs to the peptidase M50B family. In terms of assembly, interacts with RseA. Requires Zn(2+) as cofactor.

The protein resides in the cell inner membrane. In terms of biological role, a site-2 regulated intramembrane protease (S2P) that cleaves the peptide bond between 'Ala-108' and 'Cys-109' in the transmembrane region of RseA. Part of a regulated intramembrane proteolysis (RIP) cascade. Acts on DegS-cleaved RseA to release the cytoplasmic domain of RseA. This provides the cell with sigma-E (RpoE) activity through the proteolysis of RseA. The protein is Protease RseP (rseP) of Yersinia pestis.